The sequence spans 662 residues: Protein distal antenna (662 aa).

The HTH psq-type domain maps to 21 to 72 (TKGKRPLRHLTATDKIDAIQRIHDGESKASVARDIGVPESTLRGWCKNEEKL). Positions 48 to 68 (KASVARDIGVPESTLRGWCKN) form a DNA-binding region, H-T-H motif. 4 disordered regions span residues 265–299 (RNAR…STPS), 348–407 (YSQM…PEDT), 491–537 (PEDL…DDEV), and 558–596 (QSSP…KSTC). Residues 349 to 391 (SQMPRPSSPQQPQSTPPTTTTTQQQQPQSSTPPTATPPIVSTP) show a composition bias toward low complexity. A compositionally biased stretch (polar residues) spans 511-520 (FNPSPSTSIK). Over residues 527–536 (VDEDEDEDDE) the composition is skewed to acidic residues.

In terms of assembly, homomers. Interacts with itself, danr, ey and dac to form a complex (or complexes) containing the RD factors.

Its subcellular location is the nucleus. Its function is as follows. Probable transcription factor with a role in the retinal determination (RD) network. Contributes to differentiation of antenna-specific characteristics. In Culex quinquefasciatus (Southern house mosquito), this protein is Protein distal antenna.